Consider the following 360-residue polypeptide: Alanine racemase (360 aa).

Lys36 functions as the Proton acceptor; specific for D-alanine in the catalytic mechanism. N6-(pyridoxal phosphate)lysine is present on Lys36. Arg132 provides a ligand contact to substrate. Tyr256 serves as the catalytic Proton acceptor; specific for L-alanine. Met304 provides a ligand contact to substrate.

Belongs to the alanine racemase family. It depends on pyridoxal 5'-phosphate as a cofactor.

The catalysed reaction is L-alanine = D-alanine. The protein operates within amino-acid biosynthesis; D-alanine biosynthesis; D-alanine from L-alanine: step 1/1. Its function is as follows. Catalyzes the interconversion of L-alanine and D-alanine. May also act on other amino acids. The polypeptide is Alanine racemase (alr) (Pasteurella multocida (strain Pm70)).